A 92-amino-acid chain; its full sequence is Small ribosomal subunit protein uS19 (92 aa).

Belongs to the universal ribosomal protein uS19 family.

Its function is as follows. Protein S19 forms a complex with S13 that binds strongly to the 16S ribosomal RNA. This chain is Small ribosomal subunit protein uS19, found in Bacillus thuringiensis subsp. konkukian (strain 97-27).